A 210-amino-acid polypeptide reads, in one-letter code: Na(+)-translocating NADH-quinone reductase subunit D (210 aa).

5 helical membrane passes run 42–62 (FVMT…ISLI), 72–92 (IIAQ…VLKA), 103–123 (VFVG…AYAM), 131–151 (FLDG…VATV), and 178–198 (NGLL…IWGV).

This sequence belongs to the NqrDE/RnfAE family. Composed of six subunits; NqrA, NqrB, NqrC, NqrD, NqrE and NqrF.

It localises to the cell inner membrane. It carries out the reaction a ubiquinone + n Na(+)(in) + NADH + H(+) = a ubiquinol + n Na(+)(out) + NAD(+). NQR complex catalyzes the reduction of ubiquinone-1 to ubiquinol by two successive reactions, coupled with the transport of Na(+) ions from the cytoplasm to the periplasm. NqrA to NqrE are probably involved in the second step, the conversion of ubisemiquinone to ubiquinol. This chain is Na(+)-translocating NADH-quinone reductase subunit D, found in Aeromonas hydrophila subsp. hydrophila (strain ATCC 7966 / DSM 30187 / BCRC 13018 / CCUG 14551 / JCM 1027 / KCTC 2358 / NCIMB 9240 / NCTC 8049).